The primary structure comprises 673 residues: UvrABC system protein B (673 aa).

Residues 26–183 enclose the Helicase ATP-binding domain; the sequence is EGLEDGLAHQ…RRLAELQYTR (158 aa). 39 to 46 contacts ATP; sequence GVTGSGKT. Positions 92 to 115 match the Beta-hairpin motif; sequence YYDYYQPEAYVPSSDTFIEKDASV. The Helicase C-terminal domain occupies 431 to 597; the sequence is QVDDLLSEIR…GLNKKVVDIL (167 aa). One can recognise a UVR domain in the interval 633 to 668; sequence QQKIHELEGQMMQHAQNLEFEEAAQIRDQLHQLREL.

This sequence belongs to the UvrB family. As to quaternary structure, forms a heterotetramer with UvrA during the search for lesions. Interacts with UvrC in an incision complex.

It is found in the cytoplasm. Its function is as follows. The UvrABC repair system catalyzes the recognition and processing of DNA lesions. A damage recognition complex composed of 2 UvrA and 2 UvrB subunits scans DNA for abnormalities. Upon binding of the UvrA(2)B(2) complex to a putative damaged site, the DNA wraps around one UvrB monomer. DNA wrap is dependent on ATP binding by UvrB and probably causes local melting of the DNA helix, facilitating insertion of UvrB beta-hairpin between the DNA strands. Then UvrB probes one DNA strand for the presence of a lesion. If a lesion is found the UvrA subunits dissociate and the UvrB-DNA preincision complex is formed. This complex is subsequently bound by UvrC and the second UvrB is released. If no lesion is found, the DNA wraps around the other UvrB subunit that will check the other stand for damage. This is UvrABC system protein B from Salmonella arizonae (strain ATCC BAA-731 / CDC346-86 / RSK2980).